Consider the following 232-residue polypeptide: MSACQTPVIVALDFPTREAAMRLADQLDPKLCRVKVGKELFTSCASDIVEALRGKGFDVFLDLKFHDIPNTTAMAVKAAAEMGVWMVNVHCSGGLRMMAACREVLEQRTGPQPLLIGVTVLTSMEREDLAGIGLDIDPQVQVLRLAALAEKAGMDGLVCSALEAQALKAAHPSLQLVTPGIRPAGSAQDDQRRILTPRQALDAGSDYLVIGRPISQAADPAKALAAVVAELA.

Residues Asp-13, Lys-35, 62-71 (DLKFHDIPNT), Thr-122, Arg-182, Gln-191, Gly-211, and Arg-212 each bind substrate. Lys-64 (proton donor) is an active-site residue.

This sequence belongs to the OMP decarboxylase family. Type 1 subfamily. Homodimer.

It carries out the reaction orotidine 5'-phosphate + H(+) = UMP + CO2. It participates in pyrimidine metabolism; UMP biosynthesis via de novo pathway; UMP from orotate: step 2/2. Its function is as follows. Catalyzes the decarboxylation of orotidine 5'-monophosphate (OMP) to uridine 5'-monophosphate (UMP). The polypeptide is Orotidine 5'-phosphate decarboxylase (Pseudomonas syringae pv. tomato (strain ATCC BAA-871 / DC3000)).